A 316-amino-acid chain; its full sequence is Vacuolar membrane protein YNL058C (316 aa).

The interval 32 to 60 (KPTSSVVSETSSKSLPSLTSSAFSTSSGA) is disordered. A helical membrane pass occupies residues 93 to 113 (VYIAVGAVIGAIFISILIWWL). 3 positions are modified to phosphoserine: Ser148, Ser256, and Ser276. The disordered stretch occupies residues 240–304 (EEEERKLNLN…KAHKRQAPSM (65 aa)). A compositionally biased stretch (basic and acidic residues) spans 256-271 (SPERKEKKINSMEGYH).

Belongs to the PRM5 family.

The protein localises to the vacuole membrane. In Saccharomyces cerevisiae (strain ATCC 204508 / S288c) (Baker's yeast), this protein is Vacuolar membrane protein YNL058C.